We begin with the raw amino-acid sequence, 376 residues long: UPF0754 membrane protein SERP1382 (376 aa).

2 helical membrane passes run 4-24 (ILLVVFMIILGAIIGGVTNMI) and 356-376 (TLGFILGGIIGFFQGVIAIFV).

It belongs to the UPF0754 family.

It is found in the cell membrane. In Staphylococcus epidermidis (strain ATCC 35984 / DSM 28319 / BCRC 17069 / CCUG 31568 / BM 3577 / RP62A), this protein is UPF0754 membrane protein SERP1382.